Here is a 273-residue protein sequence, read N- to C-terminus: Bifunctional protein FolD (273 aa).

Residues 152-154 (GRS), T179, and I220 each bind NADP(+).

Belongs to the tetrahydrofolate dehydrogenase/cyclohydrolase family. As to quaternary structure, homodimer.

It catalyses the reaction (6R)-5,10-methylene-5,6,7,8-tetrahydrofolate + NADP(+) = (6R)-5,10-methenyltetrahydrofolate + NADPH. The catalysed reaction is (6R)-5,10-methenyltetrahydrofolate + H2O = (6R)-10-formyltetrahydrofolate + H(+). Its pathway is one-carbon metabolism; tetrahydrofolate interconversion. Functionally, catalyzes the oxidation of 5,10-methylenetetrahydrofolate to 5,10-methenyltetrahydrofolate and then the hydrolysis of 5,10-methenyltetrahydrofolate to 10-formyltetrahydrofolate. The chain is Bifunctional protein FolD from Petrotoga mobilis (strain DSM 10674 / SJ95).